The sequence spans 185 residues: Probable prefoldin subunit 3 (185 aa).

The protein belongs to the prefoldin subunit alpha family. Heterohexamer of two PFD-alpha type and four PFD-beta type subunits.

In terms of biological role, binds specifically to cytosolic chaperonin (c-CPN) and transfers target proteins to it. Binds to nascent polypeptide chain and promotes folding in an environment in which there are many competing pathways for nonnative proteins. This chain is Probable prefoldin subunit 3 (pfd-3), found in Caenorhabditis elegans.